Consider the following 380-residue polypeptide: Beta sliding clamp (380 aa).

It belongs to the beta sliding clamp family. As to quaternary structure, forms a ring-shaped head-to-tail homodimer around DNA which binds and tethers DNA polymerases and other proteins to the DNA. The DNA replisome complex has a single clamp-loading complex (3 tau and 1 each of delta, delta', psi and chi subunits) which binds 3 Pol III cores (1 core on the leading strand and 2 on the lagging strand) each with a beta sliding clamp dimer. Additional proteins in the replisome are other copies of gamma, psi and chi, Ssb, DNA helicase and RNA primase.

The protein resides in the cytoplasm. In terms of biological role, confers DNA tethering and processivity to DNA polymerases and other proteins. Acts as a clamp, forming a ring around DNA (a reaction catalyzed by the clamp-loading complex) which diffuses in an ATP-independent manner freely and bidirectionally along dsDNA. Initially characterized for its ability to contact the catalytic subunit of DNA polymerase III (Pol III), a complex, multichain enzyme responsible for most of the replicative synthesis in bacteria; Pol III exhibits 3'-5' exonuclease proofreading activity. The beta chain is required for initiation of replication as well as for processivity of DNA replication. In Mycoplasma genitalium (strain ATCC 33530 / DSM 19775 / NCTC 10195 / G37) (Mycoplasmoides genitalium), this protein is Beta sliding clamp (dnaN).